A 150-amino-acid chain; its full sequence is MKKIDIKILDSRIGDCFKLPKYATPGSAGIDLRACIDNTISLEPGETNLISTGLAVHIADTGLAGIIIPRSGLGHHGIVLGNLVGLIDSDYQGSIMVSLWNRGKEIFTIQPNERIAQIVFVQIVQVYFNIVDNFQKSKRGERGFGHSGRV.

Substrate contacts are provided by residues 70–72 (RSG), Asn-82, 86–88 (LID), and Met-96.

Belongs to the dUTPase family. The cofactor is Mg(2+).

It carries out the reaction dUTP + H2O = dUMP + diphosphate + H(+). It participates in pyrimidine metabolism; dUMP biosynthesis; dUMP from dCTP (dUTP route): step 2/2. Functionally, this enzyme is involved in nucleotide metabolism: it produces dUMP, the immediate precursor of thymidine nucleotides and it decreases the intracellular concentration of dUTP so that uracil cannot be incorporated into DNA. The chain is Deoxyuridine 5'-triphosphate nucleotidohydrolase from Baumannia cicadellinicola subsp. Homalodisca coagulata.